The primary structure comprises 31 residues: Photosystem II reaction center protein T (31 aa).

A helical transmembrane segment spans residues 3-23; the sequence is SVAYIVVLTMALAVLFFAIAF.

This sequence belongs to the PsbT family. In terms of assembly, PSII is composed of 1 copy each of membrane proteins PsbA, PsbB, PsbC, PsbD, PsbE, PsbF, PsbH, PsbI, PsbJ, PsbK, PsbL, PsbM, PsbT, PsbX, PsbY, PsbZ, Psb30/Ycf12, peripheral proteins PsbO, CyanoQ (PsbQ), PsbU, PsbV and a large number of cofactors. It forms dimeric complexes.

The protein localises to the cellular thylakoid membrane. Functionally, found at the monomer-monomer interface of the photosystem II (PS II) dimer, plays a role in assembly and dimerization of PSII. PSII is a light-driven water plastoquinone oxidoreductase, using light energy to abstract electrons from H(2)O, generating a proton gradient subsequently used for ATP formation. This chain is Photosystem II reaction center protein T, found in Crocosphaera subtropica (strain ATCC 51142 / BH68) (Cyanothece sp. (strain ATCC 51142)).